The primary structure comprises 198 residues: uncharacterized protein (198 aa).

Positions glutamate 11 to arginine 71 constitute an HTH tetR-type domain. The H-T-H motif DNA-binding region spans threonine 34–tryptophan 53.

This is an uncharacterized protein from Bacillus subtilis (strain 168).